Reading from the N-terminus, the 331-residue chain is Ribosomal RNA small subunit methyltransferase H (331 aa).

Residues 48–50 (GGH), D67, D115, and Q122 each bind S-adenosyl-L-methionine. Residues 297-331 (RGTEKPTEEEISENRRASSAKVRAVEKIRTSRTTA) form a disordered region. Residues 298–312 (GTEKPTEEEISENRR) are compositionally biased toward basic and acidic residues.

It belongs to the methyltransferase superfamily. RsmH family.

The protein localises to the cytoplasm. The enzyme catalyses cytidine(1402) in 16S rRNA + S-adenosyl-L-methionine = N(4)-methylcytidine(1402) in 16S rRNA + S-adenosyl-L-homocysteine + H(+). Specifically methylates the N4 position of cytidine in position 1402 (C1402) of 16S rRNA. In Micrococcus luteus (strain ATCC 4698 / DSM 20030 / JCM 1464 / CCM 169 / CCUG 5858 / IAM 1056 / NBRC 3333 / NCIMB 9278 / NCTC 2665 / VKM Ac-2230) (Micrococcus lysodeikticus), this protein is Ribosomal RNA small subunit methyltransferase H.